We begin with the raw amino-acid sequence, 558 residues long: Eukaryotic translation initiation factor 3 subunit D (558 aa).

Residues 296 to 310 (EFDLLTVNETSVEPP) form an RNA gate region. The segment at 534 to 558 (DNTFESEGEEEDSDEEEQVKDAFQR) is disordered. Acidic residues predominate over residues 537–551 (FESEGEEEDSDEEEQ).

The protein belongs to the eIF-3 subunit D family. In terms of assembly, component of the eukaryotic translation initiation factor 3 (eIF-3) complex.

It is found in the cytoplasm. MRNA cap-binding component of the eukaryotic translation initiation factor 3 (eIF-3) complex, which is involved in protein synthesis of a specialized repertoire of mRNAs and, together with other initiation factors, stimulates binding of mRNA and methionyl-tRNAi to the 40S ribosome. The eIF-3 complex specifically targets and initiates translation of a subset of mRNAs involved in cell proliferation. In the eIF-3 complex, eif3d specifically recognizes and binds the 7-methylguanosine cap of a subset of mRNAs. The polypeptide is Eukaryotic translation initiation factor 3 subunit D (Nasonia vitripennis (Parasitic wasp)).